The primary structure comprises 91 residues: Small ribosomal subunit protein uS19 (91 aa).

It belongs to the universal ribosomal protein uS19 family.

In terms of biological role, protein S19 forms a complex with S13 that binds strongly to the 16S ribosomal RNA. This chain is Small ribosomal subunit protein uS19, found in Bordetella avium (strain 197N).